The primary structure comprises 368 residues: BTB/POZ and TAZ domain-containing protein 5 (368 aa).

Residues 1–25 form a disordered region; the sequence is MENMDDFSPENVLAPPPPPPPMKKS. The 69-residue stretch at 55 to 123 folds into the BTB domain; that stretch reads ADVLIHTDDN…LYSSCYEKQD (69 aa). The TAZ-type zinc finger occupies 233–324; sequence QTYTQLYEAM…SEQCKVPLCS (92 aa). Positions 335-358 are caM-binding; the sequence is RKDEKRWKLLVRNVLSTKRIGGSP.

Interacts with CUL3A. Preferentially expressed in young leaves, roots and stems.

The protein resides in the cytoplasm. The protein operates within protein modification; protein ubiquitination. Functionally, may act as a substrate-specific adapter of an E3 ubiquitin-protein ligase complex (CUL3-RBX1-BTB) which mediates the ubiquitination and subsequent proteasomal degradation of target proteins. The polypeptide is BTB/POZ and TAZ domain-containing protein 5 (BT5) (Arabidopsis thaliana (Mouse-ear cress)).